A 416-amino-acid polypeptide reads, in one-letter code: Vacuole membrane protein KMS2 (416 aa).

The residue at position 2 (glycine 2) is an N-acetylglycine. Topologically, residues 2–59 are cytoplasmic; it reads GYGNRASSKTPAISGLREKHQQDLEKLTLTSQPFKTLRLFVVAVFLYVRRWSSYLLAN. Residues 60–80 traverse the membrane as a helical segment; that stretch reads VGWLILFCSIFVAFAALLVTL. Residues 81–100 are Lumenal-facing; it reads DGPHVKHVEELSEYTRFGLW. Residues 101–123 traverse the membrane as a helical segment; that stretch reads WIFLGVASSIGLGSGLHTFVLYL. The Cytoplasmic portion of the chain corresponds to 124–249; it reads GPHIALFTIK…WLLSHSQYLN (126 aa). A helical transmembrane segment spans residues 250–270; the sequence is FFTILILASVPNPLFDLAGIM. Residues 271-281 are Lumenal-facing; sequence CGQFEKPFWEF. Residues 282-304 traverse the membrane as a helical segment; that stretch reads FLATLIGKAIIKTHIQTVFIICV. At 305 to 315 the chain is on the cytoplasmic side; it reads CNNQLLDWVEN. The helical transmembrane segment at 316–336 threads the bilayer; the sequence is ELIYILSFVPGFASALPELTA. The Lumenal segment spans residues 337 to 364; sequence KLRLMKEKYLIASPPVSSDINVKKWDLS. A helical membrane pass occupies residues 365 to 385; it reads FASVWNGVVWLMLLNFFGQIV. At 386-416 the chain is on the cytoplasmic side; it reads TSTAQRYLKKQQEEELDALTNKSSLTSKKSK.

Belongs to the VMP1 family.

The protein resides in the endoplasmic reticulum membrane. Functionally, involved in the early secretory pathway. Required for the correct export of secretory products from the endoplasmic reticulum (ER) and involved in the maintenance of ER integrity. In Arabidopsis thaliana (Mouse-ear cress), this protein is Vacuole membrane protein KMS2.